The following is a 363-amino-acid chain: NAD kinase 1 (363 aa).

D68 serves as the catalytic Proton acceptor. Residues 68 to 69 (DG), R73, 175 to 176 (ND), R186, D205, A240, and Q275 contribute to the NAD(+) site.

The protein belongs to the NAD kinase family. Requires a divalent metal cation as cofactor.

It is found in the cytoplasm. It catalyses the reaction NAD(+) + ATP = ADP + NADP(+) + H(+). Involved in the regulation of the intracellular balance of NAD and NADP, and is a key enzyme in the biosynthesis of NADP. Catalyzes specifically the phosphorylation on 2'-hydroxyl of the adenosine moiety of NAD to yield NADP. This Streptomyces coelicolor (strain ATCC BAA-471 / A3(2) / M145) protein is NAD kinase 1.